The sequence spans 704 residues: Elongation factor G (704 aa).

The tr-type G domain occupies 8–290 (ARYRNIGISA…AVIDYLPSPV (283 aa)). GTP contacts are provided by residues 17-24 (AHIDAGKT), 88-92 (DTPGH), and 142-145 (NKMD).

Belongs to the TRAFAC class translation factor GTPase superfamily. Classic translation factor GTPase family. EF-G/EF-2 subfamily.

The protein localises to the cytoplasm. In terms of biological role, catalyzes the GTP-dependent ribosomal translocation step during translation elongation. During this step, the ribosome changes from the pre-translocational (PRE) to the post-translocational (POST) state as the newly formed A-site-bound peptidyl-tRNA and P-site-bound deacylated tRNA move to the P and E sites, respectively. Catalyzes the coordinated movement of the two tRNA molecules, the mRNA and conformational changes in the ribosome. The polypeptide is Elongation factor G (Salmonella arizonae (strain ATCC BAA-731 / CDC346-86 / RSK2980)).